The following is a 72-amino-acid chain: Translation initiation factor IF-1 (72 aa).

Residues 1-72 form the S1-like domain; it reads MAKEGAIEVE…TRGRIVYRYK (72 aa).

Belongs to the IF-1 family. As to quaternary structure, component of the 30S ribosomal translation pre-initiation complex which assembles on the 30S ribosome in the order IF-2 and IF-3, IF-1 and N-formylmethionyl-tRNA(fMet); mRNA recruitment can occur at any time during PIC assembly.

Its subcellular location is the cytoplasm. Functionally, one of the essential components for the initiation of protein synthesis. Stabilizes the binding of IF-2 and IF-3 on the 30S subunit to which N-formylmethionyl-tRNA(fMet) subsequently binds. Helps modulate mRNA selection, yielding the 30S pre-initiation complex (PIC). Upon addition of the 50S ribosomal subunit IF-1, IF-2 and IF-3 are released leaving the mature 70S translation initiation complex. This is Translation initiation factor IF-1 from Corynebacterium efficiens (strain DSM 44549 / YS-314 / AJ 12310 / JCM 11189 / NBRC 100395).